The chain runs to 143 residues: 18 kDa heat shock protein (143 aa).

The sHSP domain maps to 23-135 (TWSRPTAMPM…KRRRVKVGQG (113 aa)).

This sequence belongs to the small heat shock protein (HSP20) family.

This chain is 18 kDa heat shock protein (hsp18), found in Streptomyces albus G.